An 807-amino-acid polypeptide reads, in one-letter code: Zinc finger protein 594 (807 aa).

The segment at 1–23 is disordered; that stretch reads MKEWKSKMEISEEKKSARAASEK. C2H2-type zinc fingers lie at residues 127–149, 155–177, 183–205, 211–233, 239–261, 267–289, 295–317, and 323–345; these read YECK…QRIH, YVCN…QRIH, YICH…KQIH, YLCN…HRIH, YECY…QRIH, LKCN…QRLH, and YECH…QRLH. Residues 348 to 370 form a C2H2-type 9; degenerate zinc finger; the sequence is EKIEECEKTFSKDEELREEQRIH. C2H2-type zinc fingers lie at residues 376-398, 404-426, 432-454, 460-482, 488-510, and 516-538; these read YWCN…QVTH, YECK…HRIH, CVCS…HRVH, YECS…QKIH, YQCT…RRIH, and YECK…QSLH. The C2H2-type 16; degenerate zinc-finger motif lies at 543–562; sequence LECEKTFSQDEELRGEQKIH. C2H2-type zinc fingers lie at residues 568 to 590, 596 to 618, 624 to 646, 652 to 674, 680 to 702, and 708 to 730; these read YWCN…QVTH, YECK…HRIH, YVCN…HRIH, YECS…QKIH, YQCS…RRLH, and YECK…QRLH. The segment at 733-755 adopts a C2H2-type 23; degenerate zinc-finger fold; that stretch reads EKLEECEKTFSKDEELRKEQRTH. A C2H2-type 24 zinc finger spans residues 761-783; the sequence is YWCNQCSRTFQGSSDLIRHQVTH.

Belongs to the krueppel C2H2-type zinc-finger protein family.

It localises to the nucleus. In terms of biological role, may be involved in transcriptional regulation. The protein is Zinc finger protein 594 (ZNF594) of Homo sapiens (Human).